Consider the following 464-residue polypeptide: ATP synthase subunit beta (464 aa).

Residue 154–161 participates in ATP binding; the sequence is GGAGVGKT.

The protein belongs to the ATPase alpha/beta chains family. F-type ATPases have 2 components, CF(1) - the catalytic core - and CF(0) - the membrane proton channel. CF(1) has five subunits: alpha(3), beta(3), gamma(1), delta(1), epsilon(1). CF(0) has three main subunits: a(1), b(2) and c(9-12). The alpha and beta chains form an alternating ring which encloses part of the gamma chain. CF(1) is attached to CF(0) by a central stalk formed by the gamma and epsilon chains, while a peripheral stalk is formed by the delta and b chains.

Its subcellular location is the cell membrane. It catalyses the reaction ATP + H2O + 4 H(+)(in) = ADP + phosphate + 5 H(+)(out). In terms of biological role, produces ATP from ADP in the presence of a proton gradient across the membrane. The catalytic sites are hosted primarily by the beta subunits. This Mycoplasmopsis synoviae (strain 53) (Mycoplasma synoviae) protein is ATP synthase subunit beta.